Consider the following 350-residue polypeptide: CMP-N-acetylneuraminate-beta-galactosamide-alpha-2,3-sialyltransferase 2 (350 aa).

Topologically, residues 1–6 are cytoplasmic; that stretch reads MKCSLR. A helical; Signal-anchor for type II membrane protein membrane pass occupies residues 7-27; sequence VWFLSMAFLLVFIMSLLFTYS. Topologically, residues 28 to 350 are lumenal; it reads HHSMATLPYL…ASKIEVYRGN (323 aa). 3 cysteine pairs are disulfide-bonded: C70/C75, C72/C149, and C152/C291. Positions 116, 157, and 180 each coordinate substrate. N211 carries N-linked (GlcNAc...) asparagine glycosylation. Substrate-binding residues include Y240, Y276, G280, G300, H309, and H326.

It belongs to the glycosyltransferase 29 family. Homodimer; disulfide-linked. Homodimer formation occurs in the endoplasmic reticulum. Post-translationally, the soluble form derives from the membrane form by proteolytic processing. N-glycosylated; necessary for proper exit from endoplasmic reticulum and trafficking to the Golgi apparatus. Strongly expressed in brain and liver and to a lesser extent in heart and kidney. Scarcely detectable in lung, pancreas, spleen and submaxillary gland. Expressed in L5 dorsal root ganglion (DRG) neurons (at protein level).

It is found in the golgi apparatus. The protein resides in the golgi stack membrane. The protein localises to the secreted. It carries out the reaction a beta-D-galactosyl-(1-&gt;3)-N-acetyl-alpha-D-galactosaminyl derivative + CMP-N-acetyl-beta-neuraminate = an N-acetyl-alpha-neuraminyl-(2-&gt;3)-beta-D-galactosyl-(1-&gt;3)-N-acetyl-alpha-D-galactosaminyl derivative + CMP + H(+). The catalysed reaction is a ganglioside GM1 (d18:1(4E)) + CMP-N-acetyl-beta-neuraminate = a ganglioside GD1a (d18:1(4E)) + CMP + H(+). It catalyses the reaction ganglioside GM1 (d18:1(4E)/18:0) + CMP-N-acetyl-beta-neuraminate = ganglioside GD1a (18:1(4E)/18:0) + CMP + H(+). The enzyme catalyses a ganglioside GA1 + CMP-N-acetyl-beta-neuraminate = a ganglioside GM1b + CMP + H(+). It carries out the reaction a ganglioside GA1 (d18:1(4E)) + CMP-N-acetyl-beta-neuraminate = a ganglioside GM1b (d18:1(4E)) + CMP + H(+). The catalysed reaction is a ganglioside GD1b + CMP-N-acetyl-beta-neuraminate = a ganglioside GT1b + CMP + H(+). It catalyses the reaction a ganglioside GD1b (d18:1(4E)) + CMP-N-acetyl-beta-neuraminate = a ganglioside GT1b (d18:1(4E)) + CMP + H(+). The enzyme catalyses a globoside GalGb4Cer + CMP-N-acetyl-beta-neuraminate = a globoside MSGG + CMP + H(+). The protein operates within protein modification; protein glycosylation. It participates in glycolipid biosynthesis. Its function is as follows. A beta-galactoside alpha2-3 sialyltransferase primarily involved in terminal sialylation of ganglio and globo series glycolipids. Catalyzes the transfer of sialic acid (N-acetyl-neuraminic acid; Neu5Ac) from the nucleotide sugar donor CMP-Neu5Ac onto acceptor Galbeta-(1-&gt;3)-GalNAc-terminated glycoconjugates through an alpha2-3 linkage. Sialylates GM1/GM1a, GA1/asialo-GM1 and GD1b gangliosides to form GD1a, GM1b and GT1b, respectively. Together with ST3GAL3, primarily responsible for biosynthesis of brain GD1a and GT1b that function as ligands for myelin-associated glycoprotein MAG on axons, regulating MAG expression and axonal myelin stability and regeneration. Via GT1b regulates TLR2 signaling in spinal cord microglia in response to nerve injury. Responsible for the sialylation of the pluripotent stem cell- and cancer stem cell-associated antigen SSEA3, forming SSEA4. Sialylates with low efficiency asialofetuin, presumably onto O-glycosidically linked Galbeta-(1-&gt;3)-GalNAc-O-Ser. This Mus musculus (Mouse) protein is CMP-N-acetylneuraminate-beta-galactosamide-alpha-2,3-sialyltransferase 2.